Consider the following 136-residue polypeptide: Transmembrane protein 203 (136 aa).

Residues 1-51 form an interaction with STING1 region; it reads MLFSLRELVQWLGFATFEIFVHLLALLVFSVLLALRVDGLTPGLSWWNVFV. The next 4 membrane-spanning stretches (helical) occupy residues 14 to 34, 50 to 72, 81 to 101, and 112 to 132; these read FATF…VLLA, FVPF…VRLF, VLRL…EMLL, and LWFG…MIRA. The interval 52 to 136 is required for lysosomal localization of the STING-TMEM203 complex; it reads PFFAADGLST…LLMIRACRVN (85 aa).

In terms of assembly, homodimer. Interacts with ATP2A2 and ITPR3. Interacts with STIM1 and STING1 (via transmembrane domain).

The protein localises to the endoplasmic reticulum membrane. It is found in the endoplasmic reticulum-Golgi intermediate compartment. Its subcellular location is the lysosome membrane. In terms of biological role, involved in the regulation of cellular calcium homeotasis. Required for spermatogenesis. Acts as a regulator of STING-mediated inflammatory signaling in macrophages. Forms a complex with STING, promoting the activity of TBK1 kinase and the transcription factor IRF3, leading to activation of type I interferon expression. This Mus musculus (Mouse) protein is Transmembrane protein 203 (Tmem203).